A 444-amino-acid chain; its full sequence is Chromosomal replication initiator protein DnaA (444 aa).

The tract at residues 1–66 (MKSEIIESLK…SKTLRELFGK (66 aa)) is domain I, interacts with DnaA modulators. Residues 66-100 (KPMDFRIEHASAKTEEKLDSNEDEPLVKKRPLILT) form a domain II region. Residues 101–317 (PLNPILTFEN…GALVKLIMYQ (217 aa)) form a domain III, AAA+ region region. Positions 144, 146, 147, and 148 each coordinate ATP. The interval 318–444 (QISGEKVDLQ…VTGQILDQSV (127 aa)) is domain IV, binds dsDNA.

This sequence belongs to the DnaA family. Oligomerizes as a right-handed, spiral filament on DNA at oriC.

The protein resides in the cytoplasm. In terms of biological role, plays an essential role in the initiation and regulation of chromosomal replication. ATP-DnaA binds to the origin of replication (oriC) to initiate formation of the DNA replication initiation complex once per cell cycle. Binds the DnaA box (a 9 base pair repeat at the origin) and separates the double-stranded (ds)DNA. Forms a right-handed helical filament on oriC DNA; dsDNA binds to the exterior of the filament while single-stranded (ss)DNA is stabiized in the filament's interior. The ATP-DnaA-oriC complex binds and stabilizes one strand of the AT-rich DNA unwinding element (DUE), permitting loading of DNA polymerase. After initiation quickly degrades to an ADP-DnaA complex that is not apt for DNA replication. Binds acidic phospholipids. The chain is Chromosomal replication initiator protein DnaA from Pseudothermotoga lettingae (strain ATCC BAA-301 / DSM 14385 / NBRC 107922 / TMO) (Thermotoga lettingae).